We begin with the raw amino-acid sequence, 516 residues long: Cytochrome P450 1A2 (516 aa).

Ser-69 is a glycosylation site (O-linked (GlcNAc) serine). Residue Phe-226 participates in substrate binding. Cys-458 lines the heme pocket.

This sequence belongs to the cytochrome P450 family. In terms of assembly, interacts with PGRMC1; the interaction requires PGRMC1 homodimerization. It depends on heme as a cofactor.

The protein localises to the endoplasmic reticulum membrane. Its subcellular location is the microsome membrane. The enzyme catalyses an organic molecule + reduced [NADPH--hemoprotein reductase] + O2 = an alcohol + oxidized [NADPH--hemoprotein reductase] + H2O + H(+). It catalyses the reaction 17beta-estradiol + reduced [NADPH--hemoprotein reductase] + O2 = 2-hydroxy-17beta-estradiol + oxidized [NADPH--hemoprotein reductase] + H2O + H(+). The catalysed reaction is 17beta-estradiol + reduced [NADPH--hemoprotein reductase] + O2 = 4-hydroxy-17beta-estradiol + oxidized [NADPH--hemoprotein reductase] + H2O + H(+). It carries out the reaction estrone + reduced [NADPH--hemoprotein reductase] + O2 = 2-hydroxyestrone + oxidized [NADPH--hemoprotein reductase] + H2O + H(+). The enzyme catalyses estrone + reduced [NADPH--hemoprotein reductase] + O2 = 4-hydroxyestrone + oxidized [NADPH--hemoprotein reductase] + H2O + H(+). It catalyses the reaction cholesterol + reduced [NADPH--hemoprotein reductase] + O2 = 25-hydroxycholesterol + oxidized [NADPH--hemoprotein reductase] + H2O + H(+). The catalysed reaction is all-trans-retinol + reduced [NADPH--hemoprotein reductase] + O2 = all-trans-retinal + oxidized [NADPH--hemoprotein reductase] + 2 H2O + H(+). It carries out the reaction all-trans-retinal + reduced [NADPH--hemoprotein reductase] + O2 = all-trans-retinoate + oxidized [NADPH--hemoprotein reductase] + H2O + 2 H(+). The enzyme catalyses (5Z,8Z,11Z,14Z)-eicosatetraenoate + reduced [NADPH--hemoprotein reductase] + O2 = (14R,15S)-epoxy-(5Z,8Z,11Z)-eicosatrienoate + oxidized [NADPH--hemoprotein reductase] + H2O + H(+). It catalyses the reaction (5Z,8Z,11Z,14Z)-eicosatetraenoate + reduced [NADPH--hemoprotein reductase] + O2 = (14S,15R)-epoxy-(5Z,8Z,11Z)-eicosatrienoate + oxidized [NADPH--hemoprotein reductase] + H2O + H(+). The catalysed reaction is (5Z,8Z,11Z,14Z,17Z)-eicosapentaenoate + reduced [NADPH--hemoprotein reductase] + O2 = (17R,18S)-epoxy-(5Z,8Z,11Z,14Z)-eicosatetraenoate + oxidized [NADPH--hemoprotein reductase] + H2O + H(+). It carries out the reaction (4Z,7Z,10Z,13Z,16Z,19Z)-docosahexaenoate + reduced [NADPH--hemoprotein reductase] + O2 = (19R,20S)-epoxy-(4Z,7Z,10Z,13Z,16Z)-docosapentaenoate + oxidized [NADPH--hemoprotein reductase] + H2O + H(+). The enzyme catalyses (5S)-hydroperoxy-(6E,8Z,11Z,14Z)-eicosatetraenoate = 5-oxo-(6E,8Z,11Z,14Z)-eicosatetraenoate + H2O. It catalyses the reaction (12S)-hydroperoxy-(5Z,8Z,10E,14Z)-eicosatetraenoate = 12-oxo-(5Z,8Z,10E,14Z)-eicosatetraenoate + H2O. The catalysed reaction is (15S)-hydroperoxy-(5Z,8Z,11Z,13E)-eicosatetraenoate = 15-oxo-(5Z,8Z,11Z,13E)-eicosatetraenoate + H2O. It carries out the reaction (13S)-hydroperoxy-(9Z,11E)-octadecadienoate = 13-oxo-(9Z,11E)-octadecadienoate + H2O. The enzyme catalyses (5Z,8Z,11Z,14Z)-eicosatetraenoate + reduced [NADPH--hemoprotein reductase] + O2 = 13-hydroxy-(5Z,8Z,11Z,14Z)-eicosatetraenoate + oxidized [NADPH--hemoprotein reductase] + H2O + H(+). It catalyses the reaction (5Z,8Z,11Z,14Z)-eicosatetraenoate + reduced [NADPH--hemoprotein reductase] + O2 = 19-hydroxy-(5Z,8Z,11Z,14Z)-eicosatetraenoate + oxidized [NADPH--hemoprotein reductase] + H2O + H(+). The catalysed reaction is (9Z,12Z)-octadecadienoate + reduced [NADPH--hemoprotein reductase] + O2 = 11-hydroxy-(9Z,12Z)-octadecadienoate + oxidized [NADPH--hemoprotein reductase] + H2O + H(+). Its pathway is cofactor metabolism; retinol metabolism. The protein operates within steroid metabolism; cholesterol metabolism. It functions in the pathway lipid metabolism; arachidonate metabolism. A cytochrome P450 monooxygenase involved in the metabolism of various endogenous substrates, including fatty acids, steroid hormones and vitamins. Mechanistically, uses molecular oxygen inserting one oxygen atom into a substrate, and reducing the second into a water molecule, with two electrons provided by NADPH via cytochrome P450 reductase (NADPH--hemoprotein reductase). Catalyzes the hydroxylation of carbon-hydrogen bonds. Exhibits high catalytic activity for the formation of hydroxyestrogens from estrone (E1) and 17beta-estradiol (E2), namely 2-hydroxy E1 and E2. Metabolizes cholesterol toward 25-hydroxycholesterol, a physiological regulator of cellular cholesterol homeostasis. May act as a major enzyme for all-trans retinoic acid biosynthesis in the liver. Catalyzes two successive oxidative transformation of all-trans retinol to all-trans retinal and then to the active form all-trans retinoic acid. Primarily catalyzes stereoselective epoxidation of the last double bond of polyunsaturated fatty acids (PUFA), displaying a strong preference for the (R,S) stereoisomer. Catalyzes bisallylic hydroxylation and omega-1 hydroxylation of PUFA. May also participate in eicosanoids metabolism by converting hydroperoxide species into oxo metabolites (lipoxygenase-like reaction, NADPH-independent). Plays a role in the oxidative metabolism of xenobiotics. Catalyzes the N-hydroxylation of heterocyclic amines and the O-deethylation of phenacetin. Metabolizes caffeine via N3-demethylation. The polypeptide is Cytochrome P450 1A2 (CYP1A2) (Macaca fuscata fuscata (Japanese macaque)).